The chain runs to 209 residues: Urease accessory protein UreE (209 aa).

Residues Glu170–His196 show a composition bias toward basic and acidic residues. Positions Glu170–Arg209 are disordered.

Belongs to the UreE family.

It localises to the cytoplasm. Its function is as follows. Involved in urease metallocenter assembly. Binds nickel. Probably functions as a nickel donor during metallocenter assembly. This Burkholderia mallei (strain NCTC 10247) protein is Urease accessory protein UreE.